Reading from the N-terminus, the 1585-residue chain is Maestro heat-like repeat-containing protein family member 2B (1585 aa).

HEAT repeat units lie at residues 28–65 (VNKE…DMRD), 228–263 (GYAL…AAVL), 272–309 (LRRS…LAHS), 310–346 (NPGE…ADEP), 405–445 (TLNR…LVIG), 531–569 (IGLL…STVL), 572–611 (TMLL…NSTE), 662–699 (ENHL…LTKT), 777–819 (SYKE…LKPQ), 964–1001 (HLEV…KFIP), 1021–1059 (PTCT…HMPV), 1112–1151 (ASSG…VISM), 1157–1195 (GLYP…QGEQ), 1258–1295 (GVIL…EPIL), and 1363–1402 (CESL…EQDD).

As to quaternary structure, found in a complex at least composed of MROH2B, PRKACA isoform 2 and TCP11. Interacts with PRKACA. Interacts with TCP11. Post-translationally, constitutively phosphorylated on serine and threonine residues in acrosomal region of the sperm head, midpiece and flagellar regions of noncapacitated spermatozoa. Phosphorylation on tyrosine residues increases upon sperm capacitation within the acrosomal and tail regions in a protein kinase A (PKA)-dependent signaling pathway.

It is found in the cytoplasm. It localises to the cytoplasmic vesicle. Its subcellular location is the secretory vesicle. The protein resides in the acrosome. The protein localises to the cell projection. It is found in the cilium. It localises to the flagellum. Functionally, may play a role in the process of sperm capacitation. This is Maestro heat-like repeat-containing protein family member 2B from Homo sapiens (Human).